The primary structure comprises 125 residues: Salivary protein 15 Ipac-1 (125 aa).

Positions 1–15 (MKVVCIILLFGIAAA) are cleaved as a signal peptide. N-linked (GlcNAc...) asparagine glycans are attached at residues Asn-82 and Asn-94. Residues 106–125 (GPSGQTCADKSKCVGHIPGC) form a CD4-binding region.

The protein belongs to the salp15 family. As to quaternary structure, interacts with host CD4. Interacts with host DC-SIGN (CD209). Interacts with Borrelia outer surface protein C (OspC). In terms of tissue distribution, expressed in salivary glands.

The protein resides in the secreted. Salivary tick protein that downregulates host immune system by binding to both dendritic cells, and CD4(+) T cells. Specifically binds to the CD4 coreceptor on T cells. This interaction prevents the activation of the Src kinase, Lck, and its downstream substrate Zap-70, and results in deficient activation of PLCgamma1, the repression of calcium fluxes triggered by T-cell antigen receptor (TCR) ligation, and a subsequent reduction in interleukin-2 production. This salivary protein also binds to DC-SIGN (CD209) on dendritic cells (DC) and activates the Raf-1 kinase/MEK signaling pathway that results in down-regulating expression of pro-inflammatory cytokines. Furthermore, it inhibits T cell proliferation induced by DCs. It also inhibits in vitro keratinocyte inflammation induced by Borrelia burgdorferi or by the major outer surface protein (OspC) of Borrelia. In addition, it downregulates chemokines and monocyte chemoattractant protein 1, as well as several antimicrobial peptides such as defensins, cathelicidin, psoriasin, and RNase 7. Apart from its immunomodulatory activities, it is also associated with protection of Borrelia spirochetes from antibody-mediated killing through its binding to OspC. In vivo, tests on different immune disease animal models show promising therapeutic results, e.g., in inhibiting HIV infection, experimental autoimmune encephalomyelitis, transplantation rejection, and asthma. The protein is Salivary protein 15 Ipac-1 of Ixodes pacificus (Western black-legged tick).